The chain runs to 349 residues: S-adenosylmethionine decarboxylase proenzyme 3 (349 aa).

Catalysis depends on residues Glu-9 and Glu-12. Position 68 (Glu-68) interacts with substrate. The Schiff-base intermediate with substrate; via pyruvic acid role is filled by Ser-69. Ser-69 bears the Pyruvic acid (Ser); by autocatalysis mark. The Proton donor; for catalytic activity role is filled by Cys-83. Residues Ser-235 and His-248 each act as proton acceptor; for processing activity in the active site. Glu-252 is a binding site for substrate.

This sequence belongs to the eukaryotic AdoMetDC family. Requires pyruvate as cofactor. Post-translationally, is synthesized initially as an inactive proenzyme. Formation of the active enzyme involves a self-maturation process in which the active site pyruvoyl group is generated from an internal serine residue via an autocatalytic post-translational modification. Two non-identical subunits are generated from the proenzyme in this reaction, and the pyruvate is formed at the N-terminus of the alpha chain, which is derived from the carboxyl end of the proenzyme. The post-translation cleavage follows an unusual pathway, termed non-hydrolytic serinolysis, in which the side chain hydroxyl group of the serine supplies its oxygen atom to form the C-terminus of the beta chain, while the remainder of the serine residue undergoes an oxidative deamination to produce ammonia and the pyruvoyl group blocking the N-terminus of the alpha chain.

The enzyme catalyses S-adenosyl-L-methionine + H(+) = S-adenosyl 3-(methylsulfanyl)propylamine + CO2. Its pathway is amine and polyamine biosynthesis; S-adenosylmethioninamine biosynthesis; S-adenosylmethioninamine from S-adenosyl-L-methionine: step 1/1. Its function is as follows. Essential for biosynthesis of the polyamines spermidine and spermine. Essential for polyamine homeostasis, and normal plant embryogenesis, growth and development. This Arabidopsis thaliana (Mouse-ear cress) protein is S-adenosylmethionine decarboxylase proenzyme 3.